The sequence spans 180 residues: MTTKYNAGIHHRRSIRLKHYNYRSEGFYFITICCKNKECLFGHIINQQMQLNDLGNYVKQCWENIPMFFPQVRIDEFVIMPNHLHGIIEIIEQVKGKCNLPLQLRATQLPQKGTSQTIGSIVRRFKAGVTSWARKNSEIFDVWQRNYYEHIIRDEKSYLQIYEYIQNNPILWEQDQLYVD.

This is an uncharacterized protein from Haemophilus influenzae (strain ATCC 51907 / DSM 11121 / KW20 / Rd).